The sequence spans 161 residues: Putative TRAP transporter small permease protein HI_1030 (161 aa).

4 helical membrane-spanning segments follow: residues 13 to 33 (LEILCISILALMSILVFLNVV), 51 to 71 (YLFIWLAFLGAVLAFNENQHV), 86 to 106 (AILKFITDMMMLICCYLIIEG), and 135 to 155 (IAGILVSAILITRLISTIFFI).

The protein belongs to the TRAP transporter small permease family.

Its subcellular location is the cell inner membrane. In Haemophilus influenzae (strain ATCC 51907 / DSM 11121 / KW20 / Rd), this protein is Putative TRAP transporter small permease protein HI_1030.